The following is a 117-amino-acid chain: Transcription elongation factor A protein-like 8 (117 aa).

Composition is skewed to basic and acidic residues over residues 1 to 10 and 61 to 75; these read MQKSCEENEG and FKED…PEEM. Residues 1 to 75 are disordered; it reads MQKSCEENEG…PVRHLDPEEM (75 aa). The stretch at 73–100 forms a coiled coil; sequence EEMIRGVDELERLREEIRRVRNKFVMMH.

It belongs to the TFS-II family. TFA subfamily.

It localises to the nucleus. In terms of biological role, may be involved in transcriptional regulation. This chain is Transcription elongation factor A protein-like 8 (TCEAL8), found in Homo sapiens (Human).